We begin with the raw amino-acid sequence, 831 residues long: MAGSSAEQAADYRSILSISDEAARVQALDQHLSTRSYIQGYSLSQADVDVFRQLSAPPADSRLFHVARWFRHIEALLGGPQGRDEPCRLQASKGRRVQPQWSPPAGTEPCRLRLYNSLTRNKDVFIPQDGKKVTWYCCGPTVYDASHMGHARSYISFDILRRVLRDYFQYDVFYCMNITDIDDKIIRRARQNYLFEQYREQKPPATQLLKDVRDAMKPFSVKLSETTDPDKRQMLERIQNSVKLATEPLEQAVRSSLSGEEVDSKVQVLLEEAKDLLSDWLDSTGGSEVTDNSIFSKLPKFWEEEFHKDMEALNVLPPDVLTRVSEYVPEIVNFVQKIVDNGYGYASNGSVYFDTAKFAASEKHSYGKLVPEAVGDQKALQEGEGDLSISADRLSEKRSPNDFALWKASKPGEPSWPCPWGKGRPGWHIECSAMAGTLLGASMDIHGGGFDLRFPHHDNELAQSEAYFENDCWVRYFLHTGHLTIAGCKMSKSLKNFITIKDALKKHSARQLRLAFLMHSWKDTLDYSSNTMESALQYEKFMNEFFLNVKDILRAPVDITGQFEKWEAEEVELNKNFYGKKTAVHEALCDNIDTRTVMEEMRALVSQCNLYMAARKAERRRPNRALLENIAMYLTHMLKIFGAIEEESPLGFPVGGPGTNLNLESTVMPYLQVLSEFREGVRKIAREKKVLEVLQLSDALRDDILPELGVRFEDHEGLPTVVKLVDRDTLLKEKEGKKRAEEEKRRKKEEAARKKQEQEAAKLAKMKIPPSEMFLSEVNKYSKFDENGLPTHDTEGKELSKGQAKKLKKLFEAQEKLYKEYLQMLQNGSLQ.

Ala-2 is subject to N-acetylalanine. The residue at position 102 (Ser-102) is a Phosphoserine. Cys-138 provides a ligand contact to Zn(2+). Gly-139 is a binding site for L-cysteine. A 'HIGH' region motif is present at residues 140-150; sequence PTVYDASHMGH. Thr-179 lines the L-cysteine pocket. A 'KIIK' region motif is present at residues 184 to 187; sequence KIIR. Ser-388 and Ser-390 each carry phosphoserine. Zn(2+) is bound by residues Cys-431, His-456, and Glu-460. His-456 provides a ligand contact to L-cysteine. The 'KMSKS' region signature appears at 489–493; sequence KMSKS. Residue Lys-492 participates in ATP binding. Over residues 736–762 the composition is skewed to basic and acidic residues; it reads GKKRAEEEKRRKKEEAARKKQEQEAAK. Residues 736 to 766 are disordered; sequence GKKRAEEEKRRKKEEAARKKQEQEAAKLAKM. Ser-829 carries the post-translational modification Phosphoserine.

The protein belongs to the class-I aminoacyl-tRNA synthetase family. Homodimer. It depends on Zn(2+) as a cofactor.

It is found in the cytoplasm. The catalysed reaction is tRNA(Cys) + L-cysteine + ATP = L-cysteinyl-tRNA(Cys) + AMP + diphosphate. Its function is as follows. Catalyzes the ATP-dependent ligation of cysteine to tRNA(Cys). This is Cysteine--tRNA ligase, cytoplasmic (Cars1) from Mus musculus (Mouse).